Here is a 164-residue protein sequence, read N- to C-terminus: MTCQSLIYQLIVLTGKKGWVLASFCSEEAEILYQLQGVNKVIGVKFEACTGISQSRLELLTLLYHADEISQSDLQKKVNIDSAAVTRHLKQLESKGMVSRRRKPEDNRITLVRLTDQGRERIESSKKEKERFMKEMLANVSAEERRLLIDVLARMRNNINNIEA.

The 130-residue stretch at 28-157 (EAEILYQLQG…LIDVLARMRN (130 aa)) folds into the HTH marR-type domain. Positions 71–94 (QSDLQKKVNIDSAAVTRHLKQLES) form a DNA-binding region, H-T-H motif.

This is an uncharacterized protein from Bacillus subtilis (strain 168).